The sequence spans 136 residues: Ribosome-binding factor A (136 aa).

Positions Asp114–Arg136 are disordered. Over residues Asp124–Arg136 the composition is skewed to acidic residues.

The protein belongs to the RbfA family. Monomer. Binds 30S ribosomal subunits, but not 50S ribosomal subunits or 70S ribosomes.

It localises to the cytoplasm. One of several proteins that assist in the late maturation steps of the functional core of the 30S ribosomal subunit. Associates with free 30S ribosomal subunits (but not with 30S subunits that are part of 70S ribosomes or polysomes). Required for efficient processing of 16S rRNA. May interact with the 5'-terminal helix region of 16S rRNA. This chain is Ribosome-binding factor A, found in Bordetella petrii (strain ATCC BAA-461 / DSM 12804 / CCUG 43448).